A 265-amino-acid chain; its full sequence is MTGSVWAIVPAAGRGTRFGGAVPKQYLHAAGQPLMAYTLAALAAHPAVAGIVVAIAPDDADWPGWTAVHAKPLLTCVGGATRAASVLAGLLALPDGVRADDFVLVHDAARPNLALADLDRLLEIGRGDPVGAILAAPVRDTLKRAGDDGGIDGTEPRQRLWRALTPQLFRRHQLIRGLTEASAAGVDVTDEAMAIERLGLRPLLVEGAEDNFKVTTPADLARFEFELANRDRGGASREAERSAMPSAATSVFSGARSAASGSEEV.

The segment covering 231–241 has biased composition (basic and acidic residues); sequence DRGGASREAER. The disordered stretch occupies residues 231–265; it reads DRGGASREAERSAMPSAATSVFSGARSAASGSEEV. The span at 253–265 shows a compositional bias: low complexity; the sequence is SGARSAASGSEEV.

This sequence belongs to the IspD/TarI cytidylyltransferase family. IspD subfamily.

It catalyses the reaction 2-C-methyl-D-erythritol 4-phosphate + CTP + H(+) = 4-CDP-2-C-methyl-D-erythritol + diphosphate. Its pathway is isoprenoid biosynthesis; isopentenyl diphosphate biosynthesis via DXP pathway; isopentenyl diphosphate from 1-deoxy-D-xylulose 5-phosphate: step 2/6. Catalyzes the formation of 4-diphosphocytidyl-2-C-methyl-D-erythritol from CTP and 2-C-methyl-D-erythritol 4-phosphate (MEP). In Xanthomonas campestris pv. campestris (strain B100), this protein is 2-C-methyl-D-erythritol 4-phosphate cytidylyltransferase.